The sequence spans 545 residues: Chaperonin GroEL (545 aa).

ATP is bound by residues 29 to 32 (TLGP), lysine 50, 86 to 90 (DGTTT), glycine 415, and aspartate 495.

The protein belongs to the chaperonin (HSP60) family. In terms of assembly, forms a cylinder of 14 subunits composed of two heptameric rings stacked back-to-back. Interacts with the co-chaperonin GroES.

Its subcellular location is the cytoplasm. It carries out the reaction ATP + H2O + a folded polypeptide = ADP + phosphate + an unfolded polypeptide.. Together with its co-chaperonin GroES, plays an essential role in assisting protein folding. The GroEL-GroES system forms a nano-cage that allows encapsulation of the non-native substrate proteins and provides a physical environment optimized to promote and accelerate protein folding. This chain is Chaperonin GroEL, found in Phocaeicola vulgatus (strain ATCC 8482 / DSM 1447 / JCM 5826 / CCUG 4940 / NBRC 14291 / NCTC 11154) (Bacteroides vulgatus).